A 134-amino-acid chain; its full sequence is Protein Turandot E (134 aa).

An N-terminal signal peptide occupies residues 1–38; the sequence is MSYNRTLHSTTSILKMNSALQISCLLLVLGCLLGSGHG.

The protein belongs to the Turandot family.

The protein localises to the secreted. Functionally, a humoral factor that may play a role in stress tolerance. This Drosophila yakuba (Fruit fly) protein is Protein Turandot E.